A 177-amino-acid polypeptide reads, in one-letter code: Large ribosomal subunit protein eL20 (177 aa).

It belongs to the eukaryotic ribosomal protein eL20 family.

This Drosophila melanogaster (Fruit fly) protein is Large ribosomal subunit protein eL20 (RpL18A).